The following is a 263-amino-acid chain: Tryptophan synthase alpha chain (263 aa).

Residues Glu-49 and Asp-60 each act as proton acceptor in the active site.

The protein belongs to the TrpA family. Tetramer of two alpha and two beta chains.

The catalysed reaction is (1S,2R)-1-C-(indol-3-yl)glycerol 3-phosphate + L-serine = D-glyceraldehyde 3-phosphate + L-tryptophan + H2O. It functions in the pathway amino-acid biosynthesis; L-tryptophan biosynthesis; L-tryptophan from chorismate: step 5/5. Its function is as follows. The alpha subunit is responsible for the aldol cleavage of indoleglycerol phosphate to indole and glyceraldehyde 3-phosphate. This Clostridium kluyveri (strain NBRC 12016) protein is Tryptophan synthase alpha chain.